Here is a 224-residue protein sequence, read N- to C-terminus: 2-C-methyl-D-erythritol 4-phosphate cytidylyltransferase (224 aa).

It belongs to the IspD/TarI cytidylyltransferase family. IspD subfamily.

It catalyses the reaction 2-C-methyl-D-erythritol 4-phosphate + CTP + H(+) = 4-CDP-2-C-methyl-D-erythritol + diphosphate. Its pathway is isoprenoid biosynthesis; isopentenyl diphosphate biosynthesis via DXP pathway; isopentenyl diphosphate from 1-deoxy-D-xylulose 5-phosphate: step 2/6. Its function is as follows. Catalyzes the formation of 4-diphosphocytidyl-2-C-methyl-D-erythritol from CTP and 2-C-methyl-D-erythritol 4-phosphate (MEP). This chain is 2-C-methyl-D-erythritol 4-phosphate cytidylyltransferase, found in Caldicellulosiruptor saccharolyticus (strain ATCC 43494 / DSM 8903 / Tp8T 6331).